We begin with the raw amino-acid sequence, 1005 residues long: Mediator of RNA polymerase II transcription subunit 24 (1005 aa).

It belongs to the Mediator complex subunit 24 family. As to quaternary structure, component of the Mediator complex.

The protein localises to the nucleus. Its function is as follows. Component of the Mediator complex, a coactivator involved in the regulated transcription of nearly all RNA polymerase II-dependent genes. Mediator functions as a bridge to convey information from gene-specific regulatory proteins to the basal RNA polymerase II transcription machinery. Mediator is recruited to promoters by direct interactions with regulatory proteins and serves as a scaffold for the assembly of a functional preinitiation complex with RNA polymerase II and the general transcription factors. The sequence is that of Mediator of RNA polymerase II transcription subunit 24 (MED24) from Aedes aegypti (Yellowfever mosquito).